The primary structure comprises 111 residues: Nucleoid-associated protein Teth39_2199 (111 aa).

The protein belongs to the YbaB/EbfC family. As to quaternary structure, homodimer.

It is found in the cytoplasm. The protein localises to the nucleoid. Its function is as follows. Binds to DNA and alters its conformation. May be involved in regulation of gene expression, nucleoid organization and DNA protection. This is Nucleoid-associated protein Teth39_2199 from Thermoanaerobacter pseudethanolicus (strain ATCC 33223 / 39E) (Clostridium thermohydrosulfuricum).